A 608-amino-acid polypeptide reads, in one-letter code: MGKIKILEESVAARIAAGEVIERPAGVLKELLENAVDAGADTINIDIDGAGKKLIRVNDNGSGMSKEDLTLSVVRHSTSKIKNFEDLDSLDTFGFRGEALYSVAAVSKLSISSAEEGGSGNKIIVEGGKLISVSPSPNIKGTTVEVKDLFYNTPARLKFLKSDNYERSLLLKVVEESALANLHVSYNVRTDGRLVYSFLASNGDFKKTVIQRAGQILGAEIAVSLISVEDERFGFKAFLTPLSKLTAVRDLQFFFINKRPLTSKTLQQAVYKAYHGRPKDRHPAFIVFMNMPAADFDVNIHPQKRDVKFAQENAVFGFLMNVTQRALTGAAQPVDINITPASPPAATMEFSFAKPRAEEPSYKPFGQNIVEENVFAPISKQAVVVKDFEDPVSYNPEPAEPKKEMGAHVQTDNPSWWQGPYRFLGSLHKSYLIYETELGLMLVDQHAARERVLYEEYLKKMEENELGIQPLMFPVTVDLPASNVENLMLWKDWLKTAGFEIEQFSPRTVLVNAVPNIFRFKEDSLKEFIVSLAGIVGDPLKSSDELKKKTVAMLACKKSIKAKEDVSMAEADALLLDLKRCQDGMHCPHGRPVMVSLSAAELTKKFGR.

Belongs to the DNA mismatch repair MutL/HexB family.

Its function is as follows. This protein is involved in the repair of mismatches in DNA. It is required for dam-dependent methyl-directed DNA mismatch repair. May act as a 'molecular matchmaker', a protein that promotes the formation of a stable complex between two or more DNA-binding proteins in an ATP-dependent manner without itself being part of a final effector complex. In Elusimicrobium minutum (strain Pei191), this protein is DNA mismatch repair protein MutL.